We begin with the raw amino-acid sequence, 135 residues long: Ribosome-binding factor A (135 aa).

This sequence belongs to the RbfA family. As to quaternary structure, monomer. Binds 30S ribosomal subunits, but not 50S ribosomal subunits or 70S ribosomes.

Its subcellular location is the cytoplasm. In terms of biological role, one of several proteins that assist in the late maturation steps of the functional core of the 30S ribosomal subunit. Associates with free 30S ribosomal subunits (but not with 30S subunits that are part of 70S ribosomes or polysomes). Required for efficient processing of 16S rRNA. May interact with the 5'-terminal helix region of 16S rRNA. The polypeptide is Ribosome-binding factor A (Hyphomonas neptunium (strain ATCC 15444)).